We begin with the raw amino-acid sequence, 398 residues long: MIIKPRVRGFICVSTHPTGCEANVREQIDYVKARGPIANGPKKVLVIGASTGYGLAARISAAFGSDAATLGVFFERAGSETKAGTAGWYNTAAFEKFATEKGLYATSINGDAFSDEVKARTIEVIKRDLGQVDLVVYSLAAPKRTHPKSGEVFSSTLKPVGKAVNLRGIDTDKEVIKETVLEPATQKEIDDTVAVMGGEDWQMWIDALLEAGVLADGAKTTAFTYLGEKITHDIYWNGSIGAAKKDLDQKVLGIREKLAAKGGDARVSVLKAVVTQASSAIPMMPLYLSLLFKVMKEKGTHEGCIEQVYGLYKDSLYGAAPHIDEEGRLRADYKELDPEVQNRVQELWTQVTNDNIYELTDFSGYKTDFLRLFGFEIAGVDYEADVNPDVQIPKLVQV.

NAD(+)-binding positions include 48–53, 74–75, 111–112, and 139–140; these read GASTGY, FE, DA, and LA. Residue Tyr225 participates in substrate binding. Residue Tyr235 is the Proton donor of the active site. NAD(+)-binding positions include Lys244 and 273–275; that span reads VVT.

This sequence belongs to the TER reductase family. Monomer.

It catalyses the reaction a 2,3-saturated acyl-[ACP] + NAD(+) = a (2E)-enoyl-[ACP] + NADH + H(+). The protein operates within lipid metabolism; fatty acid biosynthesis. In terms of biological role, involved in the final reduction of the elongation cycle of fatty acid synthesis (FAS II). Catalyzes the reduction of a carbon-carbon double bond in an enoyl moiety that is covalently linked to an acyl carrier protein (ACP). The sequence is that of Enoyl-[acyl-carrier-protein] reductase [NADH] from Paraburkholderia phytofirmans (strain DSM 17436 / LMG 22146 / PsJN) (Burkholderia phytofirmans).